We begin with the raw amino-acid sequence, 418 residues long: Argininosuccinate synthase (418 aa).

Position 16–24 (16–24) interacts with ATP; the sequence is AYSGGLDTS. Tyrosine 95 serves as a coordination point for L-citrulline. Glycine 125 provides a ligand contact to ATP. L-aspartate is bound by residues threonine 127, asparagine 131, and aspartate 132. L-citrulline is bound at residue asparagine 131. 4 residues coordinate L-citrulline: arginine 135, serine 183, glutamate 267, and tyrosine 279.

It belongs to the argininosuccinate synthase family. Type 1 subfamily. Homotetramer.

It localises to the cytoplasm. The catalysed reaction is L-citrulline + L-aspartate + ATP = 2-(N(omega)-L-arginino)succinate + AMP + diphosphate + H(+). Its pathway is amino-acid biosynthesis; L-arginine biosynthesis; L-arginine from L-ornithine and carbamoyl phosphate: step 2/3. The protein is Argininosuccinate synthase of Bifidobacterium adolescentis (strain ATCC 15703 / DSM 20083 / NCTC 11814 / E194a).